Here is a 233-residue protein sequence, read N- to C-terminus: Large ribosomal subunit protein uL1 (233 aa).

The protein belongs to the universal ribosomal protein uL1 family. As to quaternary structure, part of the 50S ribosomal subunit.

Its function is as follows. Binds directly to 23S rRNA. The L1 stalk is quite mobile in the ribosome, and is involved in E site tRNA release. Protein L1 is also a translational repressor protein, it controls the translation of the L11 operon by binding to its mRNA. This chain is Large ribosomal subunit protein uL1, found in Vibrio campbellii (strain ATCC BAA-1116).